A 156-amino-acid polypeptide reads, in one-letter code: MKIMGLDPGLNCTGWSILSVSKDIKLIDKGTVVTNSKEDTGQRLRKIHTDVLDILRLYQVDSASMEEIFINKNPKSSISLCYARGILLLTLSTKDIPVFEYSTNYVKKSITGNGHAKKEQVSFMIEKILNVKCSGTYDISDSIAVALCHAYSKKSF.

Catalysis depends on residues D7, E66, and D138. The Mg(2+) site is built by D7, E66, and D138.

It belongs to the RuvC family. As to quaternary structure, homodimer which binds Holliday junction (HJ) DNA. The HJ becomes 2-fold symmetrical on binding to RuvC with unstacked arms; it has a different conformation from HJ DNA in complex with RuvA. In the full resolvosome a probable DNA-RuvA(4)-RuvB(12)-RuvC(2) complex forms which resolves the HJ. Mg(2+) serves as cofactor.

Its subcellular location is the cytoplasm. The enzyme catalyses Endonucleolytic cleavage at a junction such as a reciprocal single-stranded crossover between two homologous DNA duplexes (Holliday junction).. Functionally, the RuvA-RuvB-RuvC complex processes Holliday junction (HJ) DNA during genetic recombination and DNA repair. Endonuclease that resolves HJ intermediates. Cleaves cruciform DNA by making single-stranded nicks across the HJ at symmetrical positions within the homologous arms, yielding a 5'-phosphate and a 3'-hydroxyl group; requires a central core of homology in the junction. The consensus cleavage sequence is 5'-(A/T)TT(C/G)-3'. Cleavage occurs on the 3'-side of the TT dinucleotide at the point of strand exchange. HJ branch migration catalyzed by RuvA-RuvB allows RuvC to scan DNA until it finds its consensus sequence, where it cleaves and resolves the cruciform DNA. This Ehrlichia chaffeensis (strain ATCC CRL-10679 / Arkansas) protein is Crossover junction endodeoxyribonuclease RuvC.